A 313-amino-acid polypeptide reads, in one-letter code: 4-diphosphocytidyl-2-C-methyl-D-erythritol kinase (313 aa).

Residue lysine 27 is part of the active site. 110-120 (PIGGGVGGGSS) is a binding site for ATP. Aspartate 152 is an active-site residue.

This sequence belongs to the GHMP kinase family. IspE subfamily.

It catalyses the reaction 4-CDP-2-C-methyl-D-erythritol + ATP = 4-CDP-2-C-methyl-D-erythritol 2-phosphate + ADP + H(+). It participates in isoprenoid biosynthesis; isopentenyl diphosphate biosynthesis via DXP pathway; isopentenyl diphosphate from 1-deoxy-D-xylulose 5-phosphate: step 3/6. In terms of biological role, catalyzes the phosphorylation of the position 2 hydroxy group of 4-diphosphocytidyl-2C-methyl-D-erythritol. The sequence is that of 4-diphosphocytidyl-2-C-methyl-D-erythritol kinase from Histophilus somni (strain 2336) (Haemophilus somnus).